A 374-amino-acid polypeptide reads, in one-letter code: tRNA-specific 2-thiouridylase MnmA (374 aa).

Residues 13-20 and Met-39 each bind ATP; that span reads GMSGGVDS. Positions 99–101 are interaction with target base in tRNA; it reads NPD. Cys-104 acts as the Nucleophile in catalysis. Cys-104 and Cys-201 are oxidised to a cystine. Gly-128 provides a ligand contact to ATP. The interaction with tRNA stretch occupies residues 151–153; the sequence is KDQ. Cys-201 (cysteine persulfide intermediate) is an active-site residue. An interaction with tRNA region spans residues 313-314; it reads RY.

Belongs to the MnmA/TRMU family.

The protein resides in the cytoplasm. The catalysed reaction is S-sulfanyl-L-cysteinyl-[protein] + uridine(34) in tRNA + AH2 + ATP = 2-thiouridine(34) in tRNA + L-cysteinyl-[protein] + A + AMP + diphosphate + H(+). In terms of biological role, catalyzes the 2-thiolation of uridine at the wobble position (U34) of tRNA, leading to the formation of s(2)U34. In Streptococcus equi subsp. equi (strain 4047), this protein is tRNA-specific 2-thiouridylase MnmA.